We begin with the raw amino-acid sequence, 156 residues long: AP-1 complex subunit sigma-1 (156 aa).

Belongs to the adaptor complexes small subunit family. As to quaternary structure, adapter protein complex 1 (AP-1) is a heterotetramer composed of two large adaptins (gamma-type subunit APL4 and beta-type subunit APL2), a medium adaptin (mu-type subunit APM1) and a small adaptin (sigma-type subunit APS1). AP-1 interacts with clathrin. Also a component of the AP-1R complex composed of at least APM2, APL4 and APS1.

It localises to the cytoplasm. Its subcellular location is the nucleus. The protein resides in the cytoplasmic vesicle. The protein localises to the clathrin-coated vesicle membrane. It is found in the endosome. It localises to the golgi apparatus. Its function is as follows. Component of the adapter complexes which link clathrin to receptors in coated vesicles. Clathrin-associated protein complexes are believed to interact with the cytoplasmic tails of membrane proteins, leading to their selection and concentration. AP19 is probably a subunit of the Golgi membrane adapter. Component of the AP-1-related (AP-1R) complex, an adapter protein complex that mediates sorting of cargo SNARE SNC1. In contrast to the APM1-containing AP-1 complex, AP-1R is incapable of sorting CHS3. The chain is AP-1 complex subunit sigma-1 (APS1) from Saccharomyces cerevisiae (strain ATCC 204508 / S288c) (Baker's yeast).